A 199-amino-acid chain; its full sequence is V-type proton ATPase subunit E (199 aa).

This sequence belongs to the V-ATPase E subunit family.

In terms of biological role, produces ATP from ADP in the presence of a proton gradient across the membrane. The polypeptide is V-type proton ATPase subunit E (Clostridium botulinum (strain Okra / Type B1)).